The chain runs to 314 residues: Vacuolar membrane protein EC1118_1N9_3125g (314 aa).

A disordered region spans residues 32–60 (KPTSSVVSETSSKSLPSLTSSAFSTSSGA). Residues 93–113 (VYIAVGAVIGAIFISILIWWL) form a helical membrane-spanning segment. Residues Ser-148, Ser-254, and Ser-274 each carry the phosphoserine modification. The disordered stretch occupies residues 240-309 (EERKLNLNRP…PSMFLDDVLN (70 aa)). Positions 254 to 269 (SPERKEKKINSMEGYH) are enriched in basic and acidic residues.

It belongs to the PRM5 family.

The protein localises to the vacuole membrane. This Saccharomyces cerevisiae (strain Lalvin EC1118 / Prise de mousse) (Baker's yeast) protein is Vacuolar membrane protein EC1118_1N9_3125g.